An 830-amino-acid chain; its full sequence is Periplasmic nitrate reductase (830 aa).

Residues methionine 1–alanine 31 constitute a signal peptide (tat-type signal). Residues isoleucine 39–aspartate 95 form the 4Fe-4S Mo/W bis-MGD-type domain. Residues cysteine 46, cysteine 49, cysteine 53, and cysteine 81 each coordinate [4Fe-4S] cluster. Mo-bis(molybdopterin guanine dinucleotide) contacts are provided by residues lysine 83, glutamine 150, asparagine 175, cysteine 179, tryptophan 212–methionine 219, serine 243–histidine 247, glutamine 262–aspartate 264, methionine 372, glutamine 376, asparagine 482, serine 508–aspartate 509, lysine 531, aspartate 558, and threonine 718–threonine 727. Substrate is bound at residue phenylalanine 794. Residues asparagine 802 and lysine 819 each contribute to the Mo-bis(molybdopterin guanine dinucleotide) site.

This sequence belongs to the prokaryotic molybdopterin-containing oxidoreductase family. NasA/NapA/NarB subfamily. In terms of assembly, component of the periplasmic nitrate reductase NapAB complex composed of NapA and NapB. It depends on [4Fe-4S] cluster as a cofactor. Mo-bis(molybdopterin guanine dinucleotide) serves as cofactor. In terms of processing, predicted to be exported by the Tat system. The position of the signal peptide cleavage has not been experimentally proven.

It is found in the periplasm. The enzyme catalyses 2 Fe(II)-[cytochrome] + nitrate + 2 H(+) = 2 Fe(III)-[cytochrome] + nitrite + H2O. Its function is as follows. Catalytic subunit of the periplasmic nitrate reductase complex NapAB. Receives electrons from NapB and catalyzes the reduction of nitrate to nitrite. This Yersinia pestis bv. Antiqua (strain Antiqua) protein is Periplasmic nitrate reductase.